Reading from the N-terminus, the 43-residue chain is Protein PsbN (43 aa).

The chain crosses the membrane as a helical span at residues 5-27 (TLVAISISGLLVSFTGYALYTAF).

The protein belongs to the PsbN family.

It is found in the plastid. Its subcellular location is the chloroplast thylakoid membrane. May play a role in photosystem I and II biogenesis. The protein is Protein PsbN of Eucalyptus globulus subsp. globulus (Tasmanian blue gum).